The following is a 269-amino-acid chain: 4-hydroxy-tetrahydrodipicolinate reductase (269 aa).

Residues 8–13 and glutamate 34 contribute to the NAD(+) site; that span reads GAAGRM. Arginine 35 is an NADP(+) binding site. NAD(+) contacts are provided by residues 98 to 100 and 122 to 125; these read GTT and APNY. Residue histidine 155 is the Proton donor/acceptor of the active site. Histidine 156 provides a ligand contact to (S)-2,3,4,5-tetrahydrodipicolinate. The active-site Proton donor is the lysine 159. 165–166 lines the (S)-2,3,4,5-tetrahydrodipicolinate pocket; sequence GT.

It belongs to the DapB family.

The protein localises to the cytoplasm. The catalysed reaction is (S)-2,3,4,5-tetrahydrodipicolinate + NAD(+) + H2O = (2S,4S)-4-hydroxy-2,3,4,5-tetrahydrodipicolinate + NADH + H(+). It carries out the reaction (S)-2,3,4,5-tetrahydrodipicolinate + NADP(+) + H2O = (2S,4S)-4-hydroxy-2,3,4,5-tetrahydrodipicolinate + NADPH + H(+). It participates in amino-acid biosynthesis; L-lysine biosynthesis via DAP pathway; (S)-tetrahydrodipicolinate from L-aspartate: step 4/4. In terms of biological role, catalyzes the conversion of 4-hydroxy-tetrahydrodipicolinate (HTPA) to tetrahydrodipicolinate. The sequence is that of 4-hydroxy-tetrahydrodipicolinate reductase from Vibrio campbellii (strain ATCC BAA-1116).